The sequence spans 228 residues: Protein TIFY 10a (228 aa).

Residues 75–110 (REQEKRQLTIFYGGKVLVFDDFPAEKAKDLMQMASK) enclose the Tify domain. The Jas motif lies at 164-189 (PQARKASLHRFLEKRKDRLQAKAPYQ). Residues 166–173 (ARKASLHR) carry the Nuclear localization signal motif. The tract at residues 175-228 (LEKRKDRLQAKAPYQGSPSDASPVKKELQESQPWLGLGPQVAAPDLSLRQESSQ) is disordered.

It belongs to the TIFY/JAZ family. As to quaternary structure, interacts with COI1A and COI1B in a coronatine-dependent manner. Coronatine is an analog of jasmonoyl isoleucine (JA-Ile). In terms of processing, ubiquitinated. Targeted for degradation by the SCF(COI1) E3 ubiquitin ligase-proteasome pathway during jasmonate signaling.

It is found in the nucleus. Its function is as follows. Repressor of jasmonate responses. This chain is Protein TIFY 10a, found in Oryza sativa subsp. japonica (Rice).